The sequence spans 1002 residues: Solute carrier family 12 member 3 (1002 aa).

Residues 1–135 (MAELPVTELP…KSPGEPVRFG (135 aa)) lie on the Cytoplasmic side of the membrane. Phosphoserine is present on S41. The residue at position 44 (T44) is a Phosphothreonine. A Phosphoserine modification is found at S47. Phosphothreonine occurs at positions 48, 53, and 58. Residues S71 and S89 each carry the phosphoserine modification. At T122 the chain carries Phosphothreonine. Position 124 is a phosphoserine (S124). A discontinuously helical membrane pass occupies residues 136-165 (WVKGVMIRCMLNIWGVILYLRLPWITAQAG). Na(+) is bound by residues L146 and W149. A helical membrane pass occupies residues 166-187 (IVLTWLIILLSVMVTSITGLSI). The Cytoplasmic portion of the chain corresponds to 188-218 (SAISTNGKVKSGGTYFLISRSLGPELGGSIG). Residues 219–241 (LIFAFANAVGVAMHTVGFAETVR) form a helical membrane-spanning segment. The Extracellular portion of the chain corresponds to 242–253 (DLLQEYGTPIVD). A run of 2 helical transmembrane segments spans residues 254 to 278 (PINDIRIIGVVTVTVLLAISLAGME) and 279 to 301 (WESKAQVLFFLVIMVSFANYLVG). Topologically, residues 302–336 (TLIPASEDKASKGFYSYHGDIFVQNLVPDWRGIDG) are extracellular. Residues 337–358 (SFFGMFSIFFPSATGILAGANI) form a discontinuously helical membrane-spanning segment. G351, I352, and L353 together coordinate chloride. The Cytoplasmic segment spans residues 359 to 369 (SGDLKDPAVAI). The helical transmembrane segment at 370-391 (PKGTLMAIFWTTISYLAISATI) threads the bilayer. Residues 392 to 451 (GSCVVRDASGDVNDTMTPGPGPCEGLACGYGWNFTECSQQRSCRYGLINYYQTMSMVSAF) lie on the Extracellular side of the membrane. An N-linked (GlcNAc...) asparagine glycan is attached at N404. A disulfide bridge links C414 with C419. N-linked (GlcNAc...) asparagine glycosylation is present at N424. C428 and C434 form a disulfide bridge. A helical membrane pass occupies residues 452–475 (APLITAGIFGATLSSALACLVSAA). Na(+)-binding residues include A462, S465, and S466. The Cytoplasmic portion of the chain corresponds to 476 to 505 (KVFQCLCEDQLYPLIGFFGKGYGKNREPVR). A helical transmembrane segment spans residues 506–520 (GYLLAYAIAVAFIII). Residues 521–525 (AELNT) are Extracellular-facing. A helical transmembrane segment spans residues 526-542 (IAPIISNFFLCSYALIN). Residue Y538 participates in chloride binding. The Cytoplasmic segment spans residues 543–565 (FSCFHASITNSPGWRPSFRYYSK). Transmembrane regions (helical) follow at residues 566–585 (WAALFGAVISVVIMFLLTWW) and 586–597 (AALIAIGVVLFL). At 598–1002 (LLYVIYKKPE…QENVLTFYCQ (405 aa)) the chain is on the cytoplasmic side. The interval 613–628 (SVQAGSYNLALSYSVG) is scissor helix. The ATP site is built by L646, R653, V675, G739, L778, and N779.

This sequence belongs to the SLC12A transporter family. In terms of assembly, homodimer; adopts a domain-swap conformation at the scissor helices connecting the transmembrane domain and C-terminal domain. Interacts with KLHL3. Interacts with IL18R1; this interaction is increased by IL18 treatment. Ubiquitinated; ubiquitination is essential for regulation of endocytosis. Post-translationally, phosphorylated at Thr-53, Thr-58 and Ser-71 by OXSR1/OSR1 and STK39/SPAK downstream of WNK4, promoting its activity. Phosphorylated in response to IL18. In terms of tissue distribution, expressed predominantly in kidney, including in distal tubules (at protein level). Detected at low levels in heart, lung and liver. Not detected in normal aorta, but abundantly expressed in fatty streaks and advanced atherosclerotic lesions. In atherosclerotic lesions, expressed in macrophages, smooth muscle cells and endothelial cells (at protein level).

The protein localises to the cell membrane. Its subcellular location is the apical cell membrane. The catalysed reaction is chloride(out) + Na(+)(out) = chloride(in) + Na(+)(in). Phosphorylation by OXSR1/OSR1 and STK39/SPAK in kidney distal convoluted tubules promotes its activity. Also activated by OXSR1/OSR1 and STK39/SPAK downstream of WNK3. Inhibited by thiazide-type diuretic metolazone. Thiazide drugs, such as polythiazide, specifically inhibit SLC12A3/NCC transporter activity by competing with chloride for binding. Its function is as follows. Electroneutral sodium and chloride ion cotransporter, which acts as a key mediator of sodium and chloride reabsorption in kidney distal convoluted tubules. Also acts as a receptor for the pro-inflammatory cytokine IL18, thereby contributing to IL18-induced cytokine production, including IFNG, IL6, IL18 and CCL2. May act either independently of IL18R1, or in a complex with IL18R1. This is Solute carrier family 12 member 3 from Mus musculus (Mouse).